The chain runs to 151 residues: UPF0178 protein Ping_0754 (151 aa).

The protein belongs to the UPF0178 family.

The chain is UPF0178 protein Ping_0754 from Psychromonas ingrahamii (strain DSM 17664 / CCUG 51855 / 37).